The following is a 195-amino-acid chain: L-rhamnose-binding lectin CSL3 (195 aa).

2 consecutive SUEL-type lectin domains span residues 1-95 (AISI…YSCV) and 105-195 (ICEG…YTCD).

Functionally, L-rhamnose binding lectin. Has hemagglutinating activity towards rabbit erythrocytes, human type A erythrocytes, human type B erythrocytes, human type O erythrocytes and sheep erythrocytes. Hemagglutinating activity is inhibited by smooth-type lipopolysaccharide (LPS) from S.flexneri 1A, A.salmonicida and E.coli K12, but not by rough-type LPS from S.flexneri, E.coli K12 and E.coli EH100. Agglutinates E.coli K12 and B.subtilis. The polypeptide is L-rhamnose-binding lectin CSL3 (Oncorhynchus keta (Chum salmon)).